The following is a 182-amino-acid chain: Ribosome-recycling factor (182 aa).

It belongs to the RRF family.

The protein resides in the cytoplasm. Responsible for the release of ribosomes from messenger RNA at the termination of protein biosynthesis. May increase the efficiency of translation by recycling ribosomes from one round of translation to another. In Nostoc punctiforme (strain ATCC 29133 / PCC 73102), this protein is Ribosome-recycling factor.